The chain runs to 158 residues: MSRSPRKTSKSAGLQLGRAVAWPATPDAAQIDRVPNPQAGTDYLVRFTAPEFTSLCPVTGQPDFAHLVIDYAPGAWLVESKSLKLYLASFRNHGGFHEDCTVSIGKRIAAEIKPKWLRIGGYWYPRGGIPIDVFWQTGKLPKNVWVPDQGVATYRGRG.

The active-site Thioimide intermediate is the Cys56. Asp63 (proton donor) is an active-site residue. Substrate is bound by residues 78-80 (VES) and 97-98 (HE).

This sequence belongs to the GTP cyclohydrolase I family. QueF type 1 subfamily.

It localises to the cytoplasm. It catalyses the reaction 7-aminomethyl-7-carbaguanine + 2 NADP(+) = 7-cyano-7-deazaguanine + 2 NADPH + 3 H(+). Its pathway is tRNA modification; tRNA-queuosine biosynthesis. Functionally, catalyzes the NADPH-dependent reduction of 7-cyano-7-deazaguanine (preQ0) to 7-aminomethyl-7-deazaguanine (preQ1). The sequence is that of NADPH-dependent 7-cyano-7-deazaguanine reductase from Rhodopseudomonas palustris (strain HaA2).